The chain runs to 130 residues: Small ribosomal subunit protein uS9 (130 aa).

Belongs to the universal ribosomal protein uS9 family.

In Halorhodospira halophila (strain DSM 244 / SL1) (Ectothiorhodospira halophila (strain DSM 244 / SL1)), this protein is Small ribosomal subunit protein uS9.